The sequence spans 308 residues: D-alanine--D-alanine ligase B (308 aa).

Residues 102-302 (KKIVKTVGVP…FGELLSWMVE (201 aa)) form the ATP-grasp domain. ATP is bound at residue 128-183 (PMKPPYVIKPVNEGSSFGVVIVSEGQSHPPQVVGSSEWKYGDTVMVERYIHGRELT). Residues D252, E269, and N271 each contribute to the Mg(2+) site.

The protein belongs to the D-alanine--D-alanine ligase family. Requires Mg(2+) as cofactor. It depends on Mn(2+) as a cofactor.

The protein resides in the cytoplasm. The catalysed reaction is 2 D-alanine + ATP = D-alanyl-D-alanine + ADP + phosphate + H(+). Its pathway is cell wall biogenesis; peptidoglycan biosynthesis. In terms of biological role, cell wall formation. This chain is D-alanine--D-alanine ligase B, found in Mesorhizobium japonicum (strain LMG 29417 / CECT 9101 / MAFF 303099) (Mesorhizobium loti (strain MAFF 303099)).